An 853-amino-acid polypeptide reads, in one-letter code: DNA mismatch repair protein MutS (853 aa).

614 to 621 (GPNMGGKS) contributes to the ATP binding site.

Belongs to the DNA mismatch repair MutS family.

In terms of biological role, this protein is involved in the repair of mismatches in DNA. It is possible that it carries out the mismatch recognition step. This protein has a weak ATPase activity. The chain is DNA mismatch repair protein MutS from Enterobacter sp. (strain 638).